We begin with the raw amino-acid sequence, 897 residues long: Protein transport protein SEC24-1 (897 aa).

The Zn(2+) site is built by Cys213, Cys216, Cys235, and Cys238. A zinc finger-like region spans residues 213 to 238; sequence CRRCRSYINPFAKFIEQGRRWRCNFC.

Belongs to the SEC23/SEC24 family. SEC24 subfamily. The COPII coat is composed of at least 5 proteins: the SEC23/24 complex, the SEC13/31 complex, and the protein SAR1. Golgi apparatus membrane; Peripheral membrane protein; Cytoplasmic side.

Its subcellular location is the cytoplasm. The protein resides in the cytoplasmic vesicle. It localises to the COPII-coated vesicle membrane. It is found in the endoplasmic reticulum membrane. The protein localises to the golgi apparatus membrane. Its function is as follows. Component of the coat protein complex II (COPII) which promotes the formation of transport vesicles from the endoplasmic reticulum (ER). The coat has two main functions, the physical deformation of the endoplasmic reticulum membrane into vesicles and the selection of cargo molecules. In Candida glabrata (strain ATCC 2001 / BCRC 20586 / JCM 3761 / NBRC 0622 / NRRL Y-65 / CBS 138) (Yeast), this protein is Protein transport protein SEC24-1 (SEC241).